Here is a 134-residue protein sequence, read N- to C-terminus: Protein PsiE homolog (134 aa).

4 consecutive transmembrane segments (helical) span residues L14 to I34, V56 to F76, F82 to S102, and P106 to S126.

The protein belongs to the PsiE family.

Its subcellular location is the cell membrane. The protein is Protein PsiE homolog of Bacillus anthracis.